Reading from the N-terminus, the 51-residue chain is Large ribosomal subunit protein bL33 (51 aa).

Positions 1-21 (MRDKIKLESSAGTGHFYTTTK) are disordered. Positions 10–20 (SAGTGHFYTTT) are enriched in polar residues.

The protein belongs to the bacterial ribosomal protein bL33 family.

The chain is Large ribosomal subunit protein bL33 (rpmG) from Neisseria meningitidis serogroup A / serotype 4A (strain DSM 15465 / Z2491).